The following is a 191-amino-acid chain: dITP/XTP pyrophosphatase (191 aa).

8–13 (SKNQGK) is a binding site for substrate. 2 residues coordinate Mg(2+): glutamate 38 and aspartate 67. Aspartate 67 functions as the Proton acceptor in the catalytic mechanism. Substrate contacts are provided by residues serine 68, 146-149 (FGYD), lysine 169, and 174-175 (HR).

Belongs to the HAM1 NTPase family. In terms of assembly, homodimer. It depends on Mg(2+) as a cofactor.

The catalysed reaction is XTP + H2O = XMP + diphosphate + H(+). The enzyme catalyses dITP + H2O = dIMP + diphosphate + H(+). It catalyses the reaction ITP + H2O = IMP + diphosphate + H(+). Pyrophosphatase that catalyzes the hydrolysis of nucleoside triphosphates to their monophosphate derivatives, with a high preference for the non-canonical purine nucleotides XTP (xanthosine triphosphate), dITP (deoxyinosine triphosphate) and ITP. Seems to function as a house-cleaning enzyme that removes non-canonical purine nucleotides from the nucleotide pool, thus preventing their incorporation into DNA/RNA and avoiding chromosomal lesions. This Prochlorococcus marinus subsp. pastoris (strain CCMP1986 / NIES-2087 / MED4) protein is dITP/XTP pyrophosphatase.